The primary structure comprises 323 residues: Sodium/potassium-transporting ATPase subunit beta-2 (323 aa).

Over 1–50 the chain is Cytoplasmic; that stretch reads MPTITEDCIDGFQQYYSRPPERPKKKSLKQMVYDSEDNSYFGRSMDSWAK. The chain crosses the membrane as a helical; Signal-anchor for type II membrane protein span at residues 51–71; sequence IGIFYVAFYGVLAALVAICMW. At 72–323 the chain is on the extracellular side; the sequence is AFFQTLDPRI…GSVHYELLID (252 aa). 2 disulfide bridges follow: C153–C165 and C175–C189. N-linked (GlcNAc...) asparagine glycosylation is found at N180 and N206. C241 and C298 form a disulfide bridge.

This sequence belongs to the X(+)/potassium ATPases subunit beta family. The sodium/potassium-transporting ATPase is composed of a catalytic alpha subunit, an auxiliary non-catalytic beta subunit and an additional regulatory subunit. As to expression, in embryos, it is expressed in the neurons of the CNS and PNS, in Garland cells and posterior spiracles. In adults, it shows a nervous system specific distribution: optic lobes, brain, thoracic ganglia and axonal pathways in the leg. Both isoforms concentrate in the adult head, isoform 2.2 being predominant. Both isoforms are weakly expressed in the thorax and very poorly expressed in the abdomen.

It is found in the cell membrane. Its function is as follows. This is the non-catalytic component of the active enzyme, which catalyzes the hydrolysis of ATP coupled with the exchange of Na(+) and K(+) ions across the plasma membrane. The beta subunit regulates, through assembly of alpha/beta heterodimers, the number of sodium pumps transported to the plasma membrane. The sequence is that of Sodium/potassium-transporting ATPase subunit beta-2 (nrv2) from Drosophila melanogaster (Fruit fly).